A 126-amino-acid chain; its full sequence is Large ribosomal subunit protein uL24 (126 aa).

Positions 1-23 (MKFSRDVTSSRRKQRKAHFGAPS) are disordered.

The protein belongs to the universal ribosomal protein uL24 family. As to quaternary structure, component of the large ribosomal subunit (LSU). Mature yeast ribosomes consist of a small (40S) and a large (60S) subunit. The 40S small subunit contains 1 molecule of ribosomal RNA (18S rRNA) and at least 33 different proteins. The large 60S subunit contains 3 rRNA molecules (25S, 5.8S and 5S rRNA) and at least 46 different proteins.

It is found in the cytoplasm. Its subcellular location is the nucleus. It localises to the nucleolus. In terms of biological role, component of the ribosome, a large ribonucleoprotein complex responsible for the synthesis of proteins in the cell. The small ribosomal subunit (SSU) binds messenger RNAs (mRNAs) and translates the encoded message by selecting cognate aminoacyl-transfer RNA (tRNA) molecules. The large subunit (LSU) contains the ribosomal catalytic site termed the peptidyl transferase center (PTC), which catalyzes the formation of peptide bonds, thereby polymerizing the amino acids delivered by tRNAs into a polypeptide chain. The nascent polypeptides leave the ribosome through a tunnel in the LSU and interact with protein factors that function in enzymatic processing, targeting, and the membrane insertion of nascent chains at the exit of the ribosomal tunnel. The polypeptide is Large ribosomal subunit protein uL24 (rpl26) (Schizosaccharomyces pombe (strain 972 / ATCC 24843) (Fission yeast)).